The following is a 125-amino-acid chain: Small ribosomal subunit protein uS12m (125 aa).

This sequence belongs to the universal ribosomal protein uS12 family. In terms of assembly, component of the mitochondrial ribosome small subunit.

The protein localises to the mitochondrion. Its function is as follows. Protein S12 is involved in the translation initiation step. The protein is Small ribosomal subunit protein uS12m (RPS12) of Arabidopsis thaliana (Mouse-ear cress).